We begin with the raw amino-acid sequence, 42 residues long: Photosystem I reaction center subunit IX (42 aa).

The helical transmembrane segment at Tyr7 to Ile27 threads the bilayer.

It belongs to the PsaJ family.

Its subcellular location is the plastid. The protein localises to the chloroplast thylakoid membrane. May help in the organization of the PsaE and PsaF subunits. The chain is Photosystem I reaction center subunit IX from Nephroselmis olivacea (Green alga).